The primary structure comprises 385 residues: Probable caffeine synthase 4 (385 aa).

7 residues coordinate S-adenosyl-L-homocysteine: Tyr-18, Cys-62, Asn-67, Asp-101, Leu-102, Ser-140, and Phe-141. Residues Tyr-158, Gln-161, and Phe-162 each contribute to the caffeine site. Asn-179 serves as a coordination point for Mg(2+). Thr-238 serves as a coordination point for caffeine. Positions 261, 263, and 264 each coordinate Mg(2+). Tyr-369 contacts caffeine.

This sequence belongs to the methyltransferase superfamily. Type-7 methyltransferase family. Mg(2+) serves as cofactor. Expressed in roots, stems, young and old leaves.

The protein operates within alkaloid biosynthesis. In terms of biological role, may be involved in the biosynthesis of caffeine. This Coffea arabica (Arabian coffee) protein is Probable caffeine synthase 4.